The following is a 142-amino-acid chain: MGQGKFAARNLVRTAKKFRWSDSVYSRRALKLKLKADPLEGAPIGRAIVLEKVGVEAKQPNSAIRKCVRVQLIKNGRQVTAFAVGDGAINFIDEHDEVTICGIGGRAGRSMGDIPGVRFVVSGVNGVSLNELVIGRAEKARR.

The protein belongs to the universal ribosomal protein uS12 family. In terms of assembly, part of the 30S ribosomal subunit.

In terms of biological role, with S4 and S5 plays an important role in translational accuracy. Located at the interface of the 30S and 50S subunits. The chain is Small ribosomal subunit protein uS12 from Methanocorpusculum labreanum (strain ATCC 43576 / DSM 4855 / Z).